Here is a 285-residue protein sequence, read N- to C-terminus: Zinc transporter ZupT (285 aa).

The next 3 helical transmembrane spans lie at Ala-13–Phe-33, Phe-41–Met-61, and Trp-80–Val-100. Residues Asn-153 and Glu-156 each coordinate Fe(2+). Glu-156 contributes to the Zn(2+) binding site. The helical transmembrane segment at Thr-160–Ile-180 threads the bilayer. Residue His-181 coordinates Zn(2+). Residues Asn-182, Glu-185, and Glu-214 each contribute to the Fe(2+) site. Zn(2+) is bound at residue Glu-185. Helical transmembrane passes span Phe-204 to Leu-224, Ile-228 to Ile-248, and Leu-265 to Ile-285.

The protein belongs to the ZIP transporter (TC 2.A.5) family. ZupT subfamily.

It localises to the cell membrane. The enzyme catalyses Zn(2+)(in) = Zn(2+)(out). Mediates zinc uptake. May also transport other divalent cations. The polypeptide is Zinc transporter ZupT (Clostridium perfringens (strain 13 / Type A)).